The sequence spans 145 residues: Large ribosomal subunit protein uL11 (145 aa).

Belongs to the universal ribosomal protein uL11 family. As to quaternary structure, part of the ribosomal stalk of the 50S ribosomal subunit. Interacts with L10 and the large rRNA to form the base of the stalk. L10 forms an elongated spine to which L12 dimers bind in a sequential fashion forming a multimeric L10(L12)X complex. In terms of processing, one or more lysine residues are methylated.

In terms of biological role, forms part of the ribosomal stalk which helps the ribosome interact with GTP-bound translation factors. In Aquifex aeolicus (strain VF5), this protein is Large ribosomal subunit protein uL11.